We begin with the raw amino-acid sequence, 220 residues long: StAR-related lipid transfer protein 6 (220 aa).

The START domain maps to 1–208 (MDFKAIAQQT…AKDGIKAHRT (208 aa)).

In terms of biological role, may be involved in the intracellular transport of sterols or other lipids. May bind cholesterol or other sterols. The protein is StAR-related lipid transfer protein 6 (STARD6) of Homo sapiens (Human).